Reading from the N-terminus, the 543-residue chain is Chaperonin GroEL (543 aa).

ATP-binding positions include 29–32 (TLGP), 86–90 (DGTTT), glycine 413, 476–478 (NAA), and aspartate 492.

It belongs to the chaperonin (HSP60) family. As to quaternary structure, forms a cylinder of 14 subunits composed of two heptameric rings stacked back-to-back. Interacts with the co-chaperonin GroES.

It localises to the cytoplasm. It catalyses the reaction ATP + H2O + a folded polypeptide = ADP + phosphate + an unfolded polypeptide.. Together with its co-chaperonin GroES, plays an essential role in assisting protein folding. The GroEL-GroES system forms a nano-cage that allows encapsulation of the non-native substrate proteins and provides a physical environment optimized to promote and accelerate protein folding. This chain is Chaperonin GroEL, found in Streptococcus pyogenes serotype M3 (strain SSI-1).